Reading from the N-terminus, the 282-residue chain is Tumor necrosis factor ligand superfamily member 6 (282 aa).

The Cytoplasmic segment spans residues 1-82 (MQQPFNYPYP…KKKRDHNAGL (82 aa)). Residues 30–73 (FPCPASVPGRPGQRRPPPPPPPPPPPPTLLPSRPLPPLPPPSLK) are disordered. Residues 43–71 (RRPPPPPPPPPPPPTLLPSRPLPPLPPPS) show a composition bias toward pro residues. A helical; Signal-anchor for type II membrane protein membrane pass occupies residues 83–103 (CLLVMFFMVLVALVGLGLGMF). The Extracellular segment spans residues 104–282 (QLFHLQKELT…SKTFFGLYKL (179 aa)). A compositionally biased stretch (basic and acidic residues) spans 119-132 (ASQRHTESSLEKQI). The segment at 119-140 (ASQRHTESSLEKQIGHPNLPSE) is disordered. In terms of domain architecture, THD spans 146–282 (KVAHLTGKPN…SKTFFGLYKL (137 aa)). A glycan (N-linked (GlcNAc...) asparagine) is linked at asparagine 185. Cysteines 203 and 234 form a disulfide. N-linked (GlcNAc...) asparagine glycosylation is found at asparagine 251 and asparagine 261.

It belongs to the tumor necrosis factor family. Homotrimer. Interacts with ARHGAP9, BAIAP2L1, BTK, CACNB3, CACNB4, CRK, DLG2, DNMBP, DOCK4, EPS8L3, FGR, FYB1, FYN, HCK, ITK, ITSN2, KALRN, LYN, MACC1, MIA, MPP4, MYO15A, NCF1, NCK1, NCK2, NCKIPSD, OSTF1, PIK3R1, PSTPIP1, RIMBP3C, SAMSN1, SH3GL3, SH3PXD2B, SH3PXD2A, SH3RF2, SKAP2, SNX33, SNX9, SORBS3, SPTA1, SRC, SRGAP1, SRGAP2, SRGAP3, TEC, TJP3 and YES1. In terms of processing, the soluble form derives from the membrane form by proteolytic processing. The membrane-bound form undergoes two successive intramembrane proteolytic cleavages. The first one is processed by ADAM10 producing an N-terminal fragment, which lacks the receptor-binding extracellular domain. This ADAM10-processed FasL (FasL APL) remnant form is still membrane anchored and further processed by SPPL2A that liberates the FasL intracellular domain (FasL ICD). FasL shedding by ADAM10 is a prerequisite for subsequent intramembrane cleavage by SPPL2A in T-cells. Phosphorylated by FGR on tyrosine residues; this is required for ubiquitination and subsequent internalization. Post-translationally, N-glycosylated. Glycosylation enhances apoptotic activity. In terms of processing, monoubiquitinated.

The protein resides in the cell membrane. Its subcellular location is the cytoplasmic vesicle lumen. It localises to the lysosome lumen. It is found in the secreted. The protein localises to the nucleus. Cytokine that binds to TNFRSF6/FAS, a receptor that transduces the apoptotic signal into cells. Involved in cytotoxic T-cell-mediated apoptosis, natural killer cell-mediated apoptosis and in T-cell development. Initiates fratricidal/suicidal activation-induced cell death (AICD) in antigen-activated T-cells contributing to the termination of immune responses. TNFRSF6/FAS-mediated apoptosis also has a role in the induction of peripheral tolerance. Binds to TNFRSF6B/DcR3, a decoy receptor that blocks apoptosis. Functionally, induces FAS-mediated activation of NF-kappa-B, initiating non-apoptotic signaling pathways. Can induce apoptosis but does not appear to be essential for this process. In terms of biological role, cytoplasmic form induces gene transcription inhibition. This is Tumor necrosis factor ligand superfamily member 6 (FASLG) from Sus scrofa (Pig).